The primary structure comprises 449 residues: UNC93-like protein MFSD11 (449 aa).

The helical transmembrane segment at leucine 8–cysteine 28 threads the bilayer. Asparagine 40 is a glycosylation site (N-linked (GlcNAc...) asparagine). Transmembrane regions (helical) follow at residues alanine 53 to valine 73, glycine 74 to isoleucine 94, proline 96 to tryptophan 116, isoleucine 138 to tryptophan 158, and arginine 170 to isoleucine 190. Serine 204 is modified (phosphoserine). 6 helical membrane passes run methionine 239–valine 259, leucine 277–glycine 297, proline 309–methionine 329, phenylalanine 359–leucine 379, alanine 385–tyrosine 405, and leucine 410–phenylalanine 430.

The protein belongs to the unc-93 family. In terms of tissue distribution, widely expressed.

Its subcellular location is the membrane. In Mus musculus (Mouse), this protein is UNC93-like protein MFSD11 (Mfsd11).